Reading from the N-terminus, the 289-residue chain is Thioredoxin-like protein 1 (289 aa).

In terms of domain architecture, Thioredoxin spans 2–109 (VGVKPVGSDP…EEKIKQHLEN (108 aa)). A disulfide bridge connects residues C34 and C37. S113 carries the phosphoserine modification. The PITH domain maps to 115-285 (EDTDIPKGYM…NDFKRVVGKK (171 aa)).

Component of the 19S regulatory cap of the 26S proteasome. Interacts with PSMD14/RPN11. Interacts with, and reduces EEF1A1.

Its subcellular location is the cytoplasm. The protein resides in the nucleus. Active thioredoxin with a redox potential of about -250 mV. This chain is Thioredoxin-like protein 1 (Txnl1), found in Rattus norvegicus (Rat).